The primary structure comprises 206 residues: Proteasome subunit beta type-2 (206 aa).

This sequence belongs to the peptidase T1B family. The 26S proteasome consists of a 20S proteasome core and two 19S regulatory subunits. The 20S proteasome core is composed of 28 subunits that are arranged in four stacked rings, resulting in a barrel-shaped structure. The two end rings are each formed by seven alpha subunits, and the two central rings are each formed by seven beta subunits. The catalytic chamber with the active sites is on the inside of the barrel.

The protein localises to the cytoplasm. Its subcellular location is the nucleus. In terms of biological role, non-catalytic component of the proteasome, a multicatalytic proteinase complex which is characterized by its ability to cleave peptides with Arg, Phe, Tyr, Leu, and Glu adjacent to the leaving group at neutral or slightly basic pH. The proteasome has an ATP-dependent proteolytic activity. The polypeptide is Proteasome subunit beta type-2 (PSB4) (Trypanosoma brucei brucei).